Here is a 986-residue protein sequence, read N- to C-terminus: MTSSAPGNADGQSRLAARFVAGPHVRAPDTAEHRLQDWLAELEPSLAASLRDQFASGWARSILLGIVESSPYLFDLIRADAQRLDRLLRCDPQTHLAELIARTGREVFACSGEADVMSLLRRLKSEAALLIALCDIGGVWPVMQVTAALTDVAVAAVQMALRHLLRQEAARGRLAPIDPAQPELGCGLFVLAMGKMGAGELNYSSDIDLIVFFDPDATTLAHDIEPQPFFVRVTQALARLLQSRTADGYVFRVDLRLRPDPASTQVAMSTEAALHYYEREGRTWERAAMIKARICAGDVAAGEAMLAELSPFVWRKHLDFQALTDVHDMKRQMQVYRGHSEIAVEGHNVKVGRGGIREIEFFAQTQQLIAGGRHPELRVRPTLQALDVLTASNWITAQARDELTSAYEFLRRVEHRLQMMADEQIHSLPDDVDGVARFACFFGYESRERFATDLLFHLDIVQGHYARLFEGDPTGTVSLPPVNYGAGPDEPRLLEHLVALGFRDPMMVALTLQQWLAGDYRVFRAEATRTTFNEFLPALIDGLAHADEPDRAVVAFDRFLQALQLGGRLITLLGQNRDLVALVALVLGAAPRLGDMLARQPRLMDGLIDPRFFGAIPDKRELSTRLAATLQDAGSYEEFLDRLRLFGQESLFLIGTRILSGTVSAQQAGTAFADVAEGIVHTVHNLVIERFAAQHGRIRGQETAIIAMGRLGAREMTASSDLDLILLYDFDADAPDSDGERPLQGAHYFARFTQRLISAFTSRTNYGVLYDIDMRLRPSGRAGPLASHIDSFAHYQEHEAWTWEHMALTRARVISASPAFRARIEAIIQTALRRSRDAQAIARDVADMRRAIAAEKGETDLWDLKHAAGGMVDIDFVAQYLQLVHAASKPEILDISSLQVLDHAERLGVLPRADAVILRHAARMYHDLTQILRLCVSDKFKPDQAGDDLLRVMTRAGDAPDFSALEARVRETQSEVRRVFTALLER.

Residues 1-473 (MTSSAPGNAD…HYARLFEGDP (473 aa)) are adenylyl removase. The interval 478-986 (SLPPVNYGAG…RRVFTALLER (509 aa)) is adenylyl transferase.

Belongs to the GlnE family. The cofactor is Mg(2+).

It carries out the reaction [glutamine synthetase]-O(4)-(5'-adenylyl)-L-tyrosine + phosphate = [glutamine synthetase]-L-tyrosine + ADP. The enzyme catalyses [glutamine synthetase]-L-tyrosine + ATP = [glutamine synthetase]-O(4)-(5'-adenylyl)-L-tyrosine + diphosphate. Involved in the regulation of glutamine synthetase GlnA, a key enzyme in the process to assimilate ammonia. When cellular nitrogen levels are high, the C-terminal adenylyl transferase (AT) inactivates GlnA by covalent transfer of an adenylyl group from ATP to specific tyrosine residue of GlnA, thus reducing its activity. Conversely, when nitrogen levels are low, the N-terminal adenylyl removase (AR) activates GlnA by removing the adenylyl group by phosphorolysis, increasing its activity. The regulatory region of GlnE binds the signal transduction protein PII (GlnB) which indicates the nitrogen status of the cell. The polypeptide is Bifunctional glutamine synthetase adenylyltransferase/adenylyl-removing enzyme (Bradyrhizobium sp. (strain ORS 278)).